Here is a 192-residue protein sequence, read N- to C-terminus: uncharacterized protein (192 aa).

Residues 29-160 (QRQAAVLIPV…PLDVYRRGNS (132 aa)) form the Nudix hydrolase domain. The Nudix box signature appears at 67–89 (GAVDSTDASLIAAALREAQEEVA). Positions 83 and 87 each coordinate Mg(2+).

Belongs to the Nudix hydrolase family. PCD1 subfamily. The cofactor is Mn(2+). Mg(2+) serves as cofactor.

Its function is as follows. Probably mediates the hydrolysis of some nucleoside diphosphate derivatives. This is an uncharacterized protein from Salmonella dublin (strain CT_02021853).